The chain runs to 397 residues: Phosphoglycerate kinase (397 aa).

Substrate-binding positions include 23-25 (DFN), arginine 38, 61-64 (HMGK), arginine 122, and arginine 155. Residues lysine 206, glycine 296, glutamate 327, and 353 to 356 (GGDS) each bind ATP.

The protein belongs to the phosphoglycerate kinase family. As to quaternary structure, monomer.

It localises to the cytoplasm. It carries out the reaction (2R)-3-phosphoglycerate + ATP = (2R)-3-phospho-glyceroyl phosphate + ADP. It participates in carbohydrate degradation; glycolysis; pyruvate from D-glyceraldehyde 3-phosphate: step 2/5. This Clostridium perfringens (strain ATCC 13124 / DSM 756 / JCM 1290 / NCIMB 6125 / NCTC 8237 / Type A) protein is Phosphoglycerate kinase.